A 235-amino-acid polypeptide reads, in one-letter code: Transmembrane emp24 domain-containing protein 9 (235 aa).

The first 37 residues, 1–37, serve as a signal peptide directing secretion; the sequence is MAAVRGVRVVGTSPGLLLGRGMRAFLLLLCLAARGGA. At 38-202 the chain is on the lumenal side; sequence LYFHIGETEK…RQTSESTNQR (165 aa). The GOLD domain maps to 47-145; that stretch reads KKCFIEEIPD…MLRVHLDIQV (99 aa). The tract at residues 121 to 160 is required for interaction with STX17; it reads CLHSNSTKFSLFAGGMLRVHLDIQVGEHANDYAEIAAKDK. N-linked (GlcNAc...) asparagine glycosylation is present at N125. Residues 154–184 are a coiled coil; it reads EIAAKDKLSELQLRVRQLVEQVEQIQKEQNY. K160 carries the N6-acetyllysine modification. A helical transmembrane segment spans residues 203-222; sequence VLWWSILQTLILVAIGVWQM. The Cytoplasmic segment spans residues 223–235; it reads RHLKSFFEAKKLV. Positions 228-229 match the COPII vesicle coat-binding motif; it reads FF. A COPI vesicle coat-binding motif is present at residues 228–235; it reads FFEAKKLV.

This sequence belongs to the EMP24/GP25L family. As to quaternary structure, monomer and homodimer in endoplasmic reticulum. Predominantly monomeric and to lesser extent homodimeric in endoplasmic reticulum-Golgi intermediate compartment and cis-Golgi network. Probably oligomerizes with other members of the EMP24/GP25L family such as TMED2, TMED7 and TMED10. Interacts with TMED5. Interacts (via C-terminus) with COPG1; the interaction involves dimeric TMED9. Interacts with PTPN2 and SPAST. Interacts with STX17; the interaction is direct. N-linked glycosylated containing high mannose.

It is found in the endoplasmic reticulum membrane. Its subcellular location is the golgi apparatus. The protein localises to the cis-Golgi network membrane. The protein resides in the endoplasmic reticulum-Golgi intermediate compartment membrane. It localises to the trans-Golgi network membrane. In terms of biological role, appears to be involved in vesicular protein trafficking, mainly in the early secretory pathway. In COPI vesicle-mediated retrograde transport involved in the coatomer recruitment to membranes of the early secretory pathway. Increases coatomer-dependent activity of ARFGAP2. Thought to play a crucial role in the specific retention of p24 complexes in cis-Golgi membranes; specifically contributes to the coupled localization of TMED2 and TMED10 in the cis-Golgi network. May be involved in organization of intracellular membranes, such as of the ER-Golgi intermediate compartment and the Golgi apparatus. Involved in ER localization of PTPN2. The polypeptide is Transmembrane emp24 domain-containing protein 9 (Tmed9) (Rattus norvegicus (Rat)).